Reading from the N-terminus, the 401-residue chain is Succinyl-diaminopimelate desuccinylase (401 aa).

His-82 is a binding site for Zn(2+). Asp-84 is a catalytic residue. Asp-115 is a binding site for Zn(2+). The active-site Proton acceptor is Glu-149. The Zn(2+) site is built by Glu-150, Glu-178, and His-364.

This sequence belongs to the peptidase M20A family. DapE subfamily. In terms of assembly, homodimer. Requires Zn(2+) as cofactor. It depends on Co(2+) as a cofactor.

The catalysed reaction is N-succinyl-(2S,6S)-2,6-diaminopimelate + H2O = (2S,6S)-2,6-diaminopimelate + succinate. It participates in amino-acid biosynthesis; L-lysine biosynthesis via DAP pathway; LL-2,6-diaminopimelate from (S)-tetrahydrodipicolinate (succinylase route): step 3/3. Functionally, catalyzes the hydrolysis of N-succinyl-L,L-diaminopimelic acid (SDAP), forming succinate and LL-2,6-diaminopimelate (DAP), an intermediate involved in the bacterial biosynthesis of lysine and meso-diaminopimelic acid, an essential component of bacterial cell walls. This chain is Succinyl-diaminopimelate desuccinylase, found in Verminephrobacter eiseniae (strain EF01-2).